A 314-amino-acid polypeptide reads, in one-letter code: Probable manganese-dependent inorganic pyrophosphatase (314 aa).

6 residues coordinate Mn(2+): His7, Asp11, Asp13, Asp72, His94, and Asp146.

The protein belongs to the PPase class C family. Mn(2+) serves as cofactor.

The protein localises to the cytoplasm. It catalyses the reaction diphosphate + H2O = 2 phosphate + H(+). The polypeptide is Probable manganese-dependent inorganic pyrophosphatase (ppaC) (Deinococcus radiodurans (strain ATCC 13939 / DSM 20539 / JCM 16871 / CCUG 27074 / LMG 4051 / NBRC 15346 / NCIMB 9279 / VKM B-1422 / R1)).